A 302-amino-acid chain; its full sequence is L-threonate dehydrogenase (302 aa).

NAD(+)-binding positions include 7 to 35 (FHVG…TWGA) and T102. K178 is an active-site residue. K246 lines the NAD(+) pocket.

This sequence belongs to the HIBADH-related family. L-threonate dehydrogenase subfamily.

It carries out the reaction L-threonate + NAD(+) = 2-dehydro-L-erythronate + NADH + H(+). Functionally, catalyzes oxidation of L-threonate to 2-oxo-tetronate. Can use either NAD(+) or NADP(+) as cosubstrate, with a preference for NAD(+). The protein is L-threonate dehydrogenase of Escherichia coli (strain K12).